The primary structure comprises 128 residues: UPF0102 protein GSU0650 (128 aa).

This sequence belongs to the UPF0102 family.

This chain is UPF0102 protein GSU0650, found in Geobacter sulfurreducens (strain ATCC 51573 / DSM 12127 / PCA).